The sequence spans 343 residues: MHNKINLLKEKFEHDLAKNKNSLENLIYLEQKFLGKKSFLQELNQTLKNIPSEKKPAIGKLINEFKKTIILSLQKEKQYLKTQKMNLELMQESVDVNLPGFNFSTGSIHPLYQIIEQLEDLFLSLGYEIKDGNEIESDFYNFEMLNIGKNHPARAMQDSFYINPQKLLRTHTSNIQVKEMLANEGKPLKIISSGKVFRKDNDDATHSHQFMQLEGLVIDQKINFLNLKETILTIIKELFGDSQEINIRPSYFPFTEPSIEVDLVIRKKDNSKEYLEILGAGLVHPQVLLNANYNPEKYQGFAFGIGIERIAMIKYQIENIRHFYQNDIRFLKQFSKKVKHENS.

Glu-256 is a binding site for Mg(2+).

It belongs to the class-II aminoacyl-tRNA synthetase family. Phe-tRNA synthetase alpha subunit type 1 subfamily. Tetramer of two alpha and two beta subunits. Requires Mg(2+) as cofactor.

The protein resides in the cytoplasm. It catalyses the reaction tRNA(Phe) + L-phenylalanine + ATP = L-phenylalanyl-tRNA(Phe) + AMP + diphosphate + H(+). The polypeptide is Phenylalanine--tRNA ligase alpha subunit (Phytoplasma australiense).